The chain runs to 56 residues: Ovomucoid (56 aa).

A Kazal-like domain is found at 6-56 (VDCSEYPKPACMSEYRPLCGSDNKTYVNKCNFCNAVVESNGTLTLSHFGKC). Cystine bridges form between Cys8-Cys38, Cys16-Cys35, and Cys24-Cys56. N-linked (GlcNAc...) asparagine glycosylation is present at Asn45.

Its subcellular location is the secreted. This Colinus virginianus (Northern bobwhite) protein is Ovomucoid.